Consider the following 65-residue polypeptide: MPKIKTVRGAAKRFKKTANGGFKRKHANLRHILTKKATKRKRHLRPKGLVSKNDLGLVVACLPYA.

The protein belongs to the bacterial ribosomal protein bL35 family.

The polypeptide is Large ribosomal subunit protein bL35 (Yersinia pseudotuberculosis serotype O:1b (strain IP 31758)).